A 485-amino-acid polypeptide reads, in one-letter code: E3 ubiquitin-protein ligase TRIM68 (485 aa).

An RING-type zinc finger spans residues 16-61 (CPICMTFLREPVSISCGHTFCHSCLSGLWKLPGESQNLSYTCPLCR). The B box-type zinc finger occupies 93–134 (LKTDVCDLHKEQLTMFCKEDDMVTCEACKQSPEHEAHSVVPI). Zn(2+) is bound by residues Cys98, His101, Cys120, and His126. Positions 144-226 (KLQQALEHLR…EQEKGETASK (83 aa)) form a coiled coil. One can recognise a B30.2/SPRY domain in the interval 285 to 483 (LKTDCRVLGL…TPLTICTLGG (199 aa)).

The protein belongs to the TRIM/RBCC family. As to quaternary structure, interacts with AR/androgen receptor (via ligand-binding domain). Interacts with KAT5/TIP60. Post-translationally, auto-ubiquitinated.

It localises to the cytoplasm. It is found in the perinuclear region. The protein resides in the nucleus. It catalyses the reaction S-ubiquitinyl-[E2 ubiquitin-conjugating enzyme]-L-cysteine + [acceptor protein]-L-lysine = [E2 ubiquitin-conjugating enzyme]-L-cysteine + N(6)-ubiquitinyl-[acceptor protein]-L-lysine.. It functions in the pathway protein modification; protein ubiquitination. Functions as a ubiquitin E3 ligase. Acts as a coactivator of androgen receptor (AR) depending on its ubiquitin ligase activity. In Mus musculus (Mouse), this protein is E3 ubiquitin-protein ligase TRIM68 (Trim68).